A 566-amino-acid chain; its full sequence is Macrophage colony-stimulating factor 1 (566 aa).

Positions 1–32 are cleaved as a signal peptide; sequence MTARGAAGRCPSSTWMGSRLLLVCLLVSRSVA. The Extracellular portion of the chain corresponds to 33 to 508; the sequence is EVSEHCSHMI…SSIQDPQTSA (476 aa). N-linked (GlcNAc...) asparagine glycans are attached at residues Asn-106, Asn-153, and Asn-171. 2 disordered regions span residues 197–417 and 434–484; these read PSSD…KLLP and GKKS…GAAR. The segment covering 253–265 has biased composition (polar residues); sequence PRSTCQTLESTEQ. O-linked (Xyl...) (chondroitin sulfate) serine glycosylation is present at Ser-302. Positions 348–360 are enriched in polar residues; sequence DQQPTNITDTPLT. The N-linked (GlcNAc...) asparagine glycan is linked to Asn-353. Residues Thr-355 and Thr-357 are each glycosylated (O-linked (GalNAc...) threonine). The segment covering 377–394 has biased composition (basic and acidic residues); the sequence is EKTDGSSTLREDQQEPRS. Positions 400–410 are enriched in polar residues; the sequence is LNPQRVGNSAT. Residues 434 to 445 are compositionally biased toward basic and acidic residues; that stretch reads GKKSTRDRRSPA. The chain crosses the membrane as a helical span at residues 509-531; the sequence is FVFWVLGIILVLLAVGGLLFYSW. The Cytoplasmic portion of the chain corresponds to 532–566; that stretch reads KRRSHRDPRTLDSSVGRPEGSSLAQDEDRQVELPV. The segment at 538 to 566 is disordered; the sequence is DPRTLDSSVGRPEGSSLAQDEDRQVELPV. Over residues 557-566 the composition is skewed to basic and acidic residues; that stretch reads DEDRQVELPV.

As to quaternary structure, homodimer or heterodimer; disulfide-linked. Likely to exist in multiple forms: homodimer consisting of 2 identical 150-200 kDa proteoglycan subunits, heterodimer consisting of a 150-200 kDa proteoglycan subunit and a truncated 43 kDa subunit, and a homodimer consisting of 2 identical 43 kDa subunits. Interacts with CSF1R. N-glycosylated. In terms of processing, O-glycosylated; contains chondroitin sulfate.

It localises to the cell membrane. The protein resides in the secreted. Its subcellular location is the extracellular space. Functionally, cytokine that plays an essential role in the regulation of survival, proliferation and differentiation of hematopoietic precursor cells, especially mononuclear phagocytes, such as macrophages and monocytes. Promotes the release of pro-inflammatory chemokines, and thereby plays an important role in innate immunity and in inflammatory processes. Plays an important role in the regulation of osteoclast proliferation and differentiation, the regulation of bone resorption, and is required for normal bone development. Required for normal male and female fertility. Promotes reorganization of the actin cytoskeleton, regulates formation of membrane ruffles, cell adhesion and cell migration. Plays a role in lipoprotein clearance. This is Macrophage colony-stimulating factor 1 (Csf1) from Rattus norvegicus (Rat).